The chain runs to 258 residues: MASTAMHSEPSAAAVPRHLAIIMDGNGRWAQRRRRPRVIGHRAGARAVNRTIDFCLDKGVSALTLFAFSSENWGRPQDEVDALMKLFLHALDRGVEELQRRGVQVRFIGDRSRFTAPLRDRMAGAERITAANTRLVLSIAASYGGRQDIAMAARALAVEVAAGRLQPEQIDEALLASRVALADLPAPDLFIRTGGDTRISNFLLWQLAYTELWFTETLWPEFDAGVLQQALDDYAGRERRFGLTSAQIAEKATEASSA.

The active site involves D24. D24 contacts Mg(2+). Substrate is bound by residues G25–R28, W29, R37, H41, and S69–E71. Residue N72 is the Proton acceptor of the active site. Substrate is bound by residues W73, R75, R192, and R198–S200. Position 211 (E211) interacts with Mg(2+).

Belongs to the UPP synthase family. In terms of assembly, homodimer. Mg(2+) serves as cofactor.

It catalyses the reaction 8 isopentenyl diphosphate + (2E,6E)-farnesyl diphosphate = di-trans,octa-cis-undecaprenyl diphosphate + 8 diphosphate. Its function is as follows. Catalyzes the sequential condensation of isopentenyl diphosphate (IPP) with (2E,6E)-farnesyl diphosphate (E,E-FPP) to yield (2Z,6Z,10Z,14Z,18Z,22Z,26Z,30Z,34E,38E)-undecaprenyl diphosphate (di-trans,octa-cis-UPP). UPP is the precursor of glycosyl carrier lipid in the biosynthesis of bacterial cell wall polysaccharide components such as peptidoglycan and lipopolysaccharide. This chain is Ditrans,polycis-undecaprenyl-diphosphate synthase ((2E,6E)-farnesyl-diphosphate specific), found in Xanthomonas campestris pv. campestris (strain ATCC 33913 / DSM 3586 / NCPPB 528 / LMG 568 / P 25).